A 381-amino-acid polypeptide reads, in one-letter code: Putative F-box protein At4g17200 (381 aa).

The F-box domain maps to M1 to A47.

This is Putative F-box protein At4g17200 from Arabidopsis thaliana (Mouse-ear cress).